Consider the following 185-residue polypeptide: Peroxynitrite isomerase (185 aa).

Residues 1–21 (MHHPARELPFPDALRPGARPA) are disordered. Residues 34–40 (GTWRGTG) carry the GXWXGXG motif. Residue H171 coordinates heme b.

It belongs to the nitrobindin family. In terms of assembly, homodimer. Requires heme b as cofactor.

The enzyme catalyses peroxynitrite = nitrate. It participates in nitrogen metabolism. Heme-binding protein able to scavenge peroxynitrite and to protect free L-tyrosine against peroxynitrite-mediated nitration, by acting as a peroxynitrite isomerase that converts peroxynitrite to nitrate. Therefore, this protein likely plays a role in peroxynitrite sensing and in the detoxification of reactive nitrogen and oxygen species (RNS and ROS, respectively). Is able to bind nitric oxide (NO) in vitro, but may act as a sensor of peroxynitrite levels in vivo. This Streptomyces griseus subsp. griseus (strain JCM 4626 / CBS 651.72 / NBRC 13350 / KCC S-0626 / ISP 5235) protein is Peroxynitrite isomerase.